Consider the following 381-residue polypeptide: uncharacterized protein (381 aa).

The helical transmembrane segment at 3–23 threads the bilayer; it reads GAVAGLVFLAVLVIFAIIVVA.

Belongs to the band 7/mec-2 family.

Its subcellular location is the membrane. This is an uncharacterized protein from Mycobacterium bovis (strain ATCC BAA-935 / AF2122/97).